The primary structure comprises 113 residues: MKSLLVLALLAFGAVLVSAHHLEMCEKSTDELREQLVCHRQHATGAFNAKLDQVNRQLRCNNDICTFKKLCDAPDFLTELRKYFTESEINELHELANQCDPDAHHDHPHCHPH.

Positions methionine 1–alanine 19 are cleaved as a signal peptide. 3 cysteine pairs are disulfide-bonded: cysteine 25–cysteine 71, cysteine 38–cysteine 99, and cysteine 60–cysteine 65.

It localises to the secreted. Functionally, has bacteriostatic activity against Gram-positive bacteria, but not against Gram-negative bacteria. Has fungistatic activity against some but not all fungi. Binds and sequesters copper and iron ions. Copper-chelating activity is crucial for antimicrobial activity against M.luteus. This chain is Antimicrobial peptide microplusin, found in Argas monolakensis (Mono lake bird tick).